The sequence spans 344 residues: Arylacetonitrilase (344 aa).

One can recognise a CN hydrolase domain in the interval 5 to 290 (LRVAVTQAEP…EGIVYADLDL (286 aa)). The Proton acceptor role is filled by E45. K126 is an active-site residue. The active-site Nucleophile is the C167. The tract at residues 324–344 (VIPRDEEEPSRKANVVVPKQE) is disordered.

The protein belongs to the carbon-nitrogen hydrolase superfamily. Nitrilase family.

The catalysed reaction is a nitrile + 2 H2O = a carboxylate + NH4(+). The enzyme catalyses 4-chlorophenylacetonitrile + 2 H2O = 4-chlorophenylacetate + NH4(+). In terms of biological role, nitrilase that hydrolyzes preferentially phenylacetonitrile and (R,S)-mandelonitrile. Also acts on dinitriles like phenylenediacetonitriles (PDAs) 1,2-PDA, 1,3-PDA, and 1,4-PDA, and cyanophenyl acetonitriles (CPAs) 2-CPA and 4-CPA. This chain is Arylacetonitrilase, found in Macrophomina phaseolina (strain MS6) (Charcoal rot fungus).